The sequence spans 464 residues: MWPTLRYVGGVCGLARYCVAGGFLRASGPASGVPGLLCGGGRRSSSTSSFDIVIVGGGIVGLASARTLILKHPGLSIGVVEKEKDLALHQTGHNSGVIHSGIYYKPESLKAKLCVEGAALIYEYCNLKGIPYRQCGKLIVAVEQEEIPRLQALYERGLQNGVEGLRLIQQEDIKKKEPYCRGLMAIDCPYTGIVNYQQVALSFAQDFQEAGGSILRDFEVKGIEIAKENSSRSKDGMNYPIAVKNSKGKEIRCRYVVTCAGLYSDRISELSGCNPDPQIVPFRGDYLVLKPEKGYLVKGNIYPVPDSRFPFLGVHFTPRLDGTIWLGPNAVLAFKREGYRPFDFDARDVMEVILKSGFINLVFQHFSYGVNEMYKACFLSETVKHLQKFIPEITISDVLRGPAGVRAQALDRDGNLVEDFVFDGGTGEIADRVLHVRNAPSPAATSSLAISRMIAEEAQQRFKL.

A mitochondrion-targeting transit peptide spans 1 to 52 (MWPTLRYVGGVCGLARYCVAGGFLRASGPASGVPGLLCGGGRRSSSTSSFDI). An N6-acetyllysine mark is found at lysine 105 and lysine 174.

The protein belongs to the L2HGDH family. It depends on FAD as a cofactor.

It is found in the mitochondrion. The catalysed reaction is (S)-2-hydroxyglutarate + A = 2-oxoglutarate + AH2. This chain is L-2-hydroxyglutarate dehydrogenase, mitochondrial (L2hgdh), found in Mus musculus (Mouse).